The following is a 249-amino-acid chain: Vitamin B12 import ATP-binding protein BtuD (249 aa).

Residues 5-233 form the ABC transporter domain; it reads MQLQDVAETT…PNLAQAYGMN (229 aa). Residue 33–40 coordinates ATP; sequence GPNGAGKS.

It belongs to the ABC transporter superfamily. Vitamin B12 importer (TC 3.A.1.13.1) family. In terms of assembly, the complex is composed of two ATP-binding proteins (BtuD), two transmembrane proteins (BtuC) and a solute-binding protein (BtuF).

It localises to the cell inner membrane. The catalysed reaction is an R-cob(III)alamin(out) + ATP + H2O = an R-cob(III)alamin(in) + ADP + phosphate + H(+). In terms of biological role, part of the ABC transporter complex BtuCDF involved in vitamin B12 import. Responsible for energy coupling to the transport system. This is Vitamin B12 import ATP-binding protein BtuD from Citrobacter koseri (strain ATCC BAA-895 / CDC 4225-83 / SGSC4696).